The following is a 563-amino-acid chain: Chaperonin GroEL 1 (563 aa).

Residues 29 to 32 (TIGP), 86 to 90 (DGTTT), Gly413, and Asp492 each bind ATP. The disordered stretch occupies residues 520-541 (DKPEPPSAPGAEGGDPMGGMGG). A compositionally biased stretch (gly residues) spans 530–541 (AEGGDPMGGMGG).

The protein belongs to the chaperonin (HSP60) family. As to quaternary structure, forms a cylinder of 14 subunits composed of two heptameric rings stacked back-to-back. Interacts with the co-chaperonin GroES.

It is found in the cytoplasm. It catalyses the reaction ATP + H2O + a folded polypeptide = ADP + phosphate + an unfolded polypeptide.. Together with its co-chaperonin GroES, plays an essential role in assisting protein folding. The GroEL-GroES system forms a nano-cage that allows encapsulation of the non-native substrate proteins and provides a physical environment optimized to promote and accelerate protein folding. The sequence is that of Chaperonin GroEL 1 from Prochlorococcus marinus (strain NATL1A).